We begin with the raw amino-acid sequence, 135 residues long: T-cell receptor beta chain V region 3H.25 (135 aa).

A signal peptide spans 1–20 (MATRLLCYTVLCLLGARILN). Residues 21 to 115 (SKVIQTPRYL…SALYLCASSL (95 aa)) form a v segment region. An intrachain disulfide couples cysteine 42 to cysteine 111. The segment at 116–118 (FGT) is d segment. The j segment stretch occupies residues 119-135 (SDYTFGSGTRLLVIGKA).

The chain is T-cell receptor beta chain V region 3H.25 from Mus musculus (Mouse).